Consider the following 196-residue polypeptide: MDAKQSVAAAKPSLAKKTASASFRLRNGSLNAVRLRRVFDLFDRNGDGEITVDELAQALDALGLVADRDGLAATVSAYVPEGAAGLRFEDFDALHRALGDALFGSLDGAAAAGEPGGGGGDEEEEMREAFKVFDVDGDGFISASELQEVLKKLGLPEAGSLATVREMICNVDRNSDGRVDFGEFKSMMQGITVWGP.

3 EF-hand domains span residues 30–65, 121–156, and 159–194; these read LNAV…LGLV, DEEE…LGLP, and GSLA…ITVW. The Ca(2+) site is built by D43, N45, D47, E49, E54, D134, D136, D138, E145, D172, N174, D176, R178, and E183.

Functionally, potential calcium sensor. The chain is Probable calcium-binding protein CML32 (CML32) from Oryza sativa subsp. japonica (Rice).